We begin with the raw amino-acid sequence, 353 residues long: MTIALGQFTKDENDLFDTMDDWLRRDRFVFVGWSGLLLFPCAYFAVGGWFTGTTFVTSWYTHGLASSYLEGCNFLTAAVSTPANSLAHSLLLLWGPEAQGDFTRWCQLGGLWTFVALHGAFGLIGFMLRQFELARSVQLRPYNAIAFSGPIAVFVSVFLIYPLGQSGWFFAPSFGVAAIFRFILFFQGFHNWTLNPFHMMGVAGVLGAALLCAIHGATVENTLFEDGDGANTFRAFNPTQSEETYSMVTANRFWSQIFGVAFSNKRWLHFFMLFVPVTGLWMSALGVVGLALNLRAYDFVSQEIRAAEDPEFETFYTKNILLNEGIRAWMAAQDQPHENLIFPEEVLPRGNAL.

The residue at position 2 (Thr2) is an N-acetylthreonine. Thr2 carries the post-translational modification Phosphothreonine. A helical membrane pass occupies residues 41–61; the sequence is CAYFAVGGWFTGTTFVTSWYT. His118 provides a ligand contact to chlorophyll a. The chain crosses the membrane as a helical span at residues 125 to 141; the sequence is GFMLRQFELARSVQLRP. Pheophytin a contacts are provided by Gln130 and Asn143. A helical transmembrane segment spans residues 153–166; sequence VFVSVFLIYPLGQS. Residue His198 participates in chlorophyll a binding. Residues 208–228 traverse the membrane as a helical segment; that stretch reads AALLCAIHGATVENTLFEDGD. His215 and Phe262 together coordinate a plastoquinone. His215 contributes to the Fe cation binding site. Residue His269 coordinates Fe cation. Residues 279 to 295 traverse the membrane as a helical segment; it reads GLWMSALGVVGLALNLR.

It belongs to the reaction center PufL/M/PsbA/D family. As to quaternary structure, PSII is composed of 1 copy each of membrane proteins PsbA, PsbB, PsbC, PsbD, PsbE, PsbF, PsbH, PsbI, PsbJ, PsbK, PsbL, PsbM, PsbT, PsbX, PsbY, PsbZ, Psb30/Ycf12, at least 3 peripheral proteins of the oxygen-evolving complex and a large number of cofactors. It forms dimeric complexes. The cofactor is The D1/D2 heterodimer binds P680, chlorophylls that are the primary electron donor of PSII, and subsequent electron acceptors. It shares a non-heme iron and each subunit binds pheophytin, quinone, additional chlorophylls, carotenoids and lipids. There is also a Cl(-1) ion associated with D1 and D2, which is required for oxygen evolution. The PSII complex binds additional chlorophylls, carotenoids and specific lipids..

The protein localises to the plastid. The protein resides in the chloroplast thylakoid membrane. It catalyses the reaction 2 a plastoquinone + 4 hnu + 2 H2O = 2 a plastoquinol + O2. Its function is as follows. Photosystem II (PSII) is a light-driven water:plastoquinone oxidoreductase that uses light energy to abstract electrons from H(2)O, generating O(2) and a proton gradient subsequently used for ATP formation. It consists of a core antenna complex that captures photons, and an electron transfer chain that converts photonic excitation into a charge separation. The D1/D2 (PsbA/PsbD) reaction center heterodimer binds P680, the primary electron donor of PSII as well as several subsequent electron acceptors. D2 is needed for assembly of a stable PSII complex. This chain is Photosystem II D2 protein, found in Ipomoea purpurea (Common morning glory).